The sequence spans 262 residues: Spindlin-1 (262 aa).

Residues 1 to 49 are disordered; it reads MKTPFGKTPGQRSRADAGHAGVSANMMKKRTSHKKHRTSVGPSKPVSQP. Residues lysine 7 and lysine 28 each participate in a glycyl lysine isopeptide (Lys-Gly) (interchain with G-Cter in SUMO2) cross-link. Residues 27 to 38 are compositionally biased toward basic residues; the sequence is MKKRTSHKKHRT. The residue at position 44 (lysine 44) is an N6-acetyllysine; alternate. A Glycyl lysine isopeptide (Lys-Gly) (interchain with G-Cter in SUMO2); alternate cross-link involves residue lysine 44. Residues 53-116 are tudor-like domain 1; sequence IVGCRIQHGW…RVSALEVLPD (64 aa). The segment at 93 to 98 is histone H3K4me3 and H3R8me2a binding; it reads GFDCVY. Serine 109 and serine 124 each carry phosphoserine; by AURKA. A tudor-like domain 2 region spans residues 132–193; that stretch reads MIGKAVEHMF…DYKEGDLRIM (62 aa). Residue glutamate 142 is a region of interest, histone H3K4me3 and H3R8me2a binding. Serine 199 carries the phosphoserine modification. The segment at 213–262 is tudor-like domain 3; the sequence is LVGKQVEYAKEDGSKRTGMVIHQVEAKPSVYFIKFDDDFHIYVYDLVKTS. Residues 250 to 252 form a histone H3K4me3 and H3R8me2a binding region; the sequence is DFH.

Belongs to the SPIN/STSY family. As to quaternary structure, homodimer; may form higher-order oligomers. Interacts with TCF7L2/TCF4; the interaction is direct. Interacts with HABP4 and SERBP1. Interacts with SPINDOC; SPINDOC stabilizes SPIN1 and enhances its association with bivalent H3K4me3K9me3 mark. Interacts with SPOCD1; promoting recruitment of PIWIL4 and SPOCD1 to transposons. In terms of processing, phosphorylated during oocyte meiotic maturation.

The protein resides in the nucleus. It localises to the nucleolus. In terms of biological role, chromatin reader that specifically recognizes and binds histone H3 both trimethylated at 'Lys-4' and 'Lys-9' (H3K4me3K9me3) and is involved in piRNA-mediated retrotransposon silencing during spermatogenesis. Plays a key role in the initiation of the PIWIL4-piRNA pathway, a pathway that directs transposon DNA methylation and silencing in the male embryonic germ cells, by promoting recruitment of DNA methylation machinery to transposons: binds young, but not old, LINE1 transposons, which are specifically marked with H3K4me3K9me3, and promotes the recruitment of PIWIL4 and SPOCD1 to transposons, leading to piRNA-directed DNA methylation. Also recognizes and binds histone H3 both trimethylated at 'Lys-4' and asymmetrically dimethylated at 'Arg-8' (H3K4me3 and H3R8me2a) and acts as an activator of Wnt signaling pathway downstream of PRMT2. Overexpression induces metaphase arrest and chromosomal instability. Overexpression induces metaphase arrest and chromosomal instability. Localizes to active rDNA loci and promotes the expression of rRNA genes. May play a role in cell-cycle regulation during the transition from gamete to embryo. Involved in oocyte meiotic resumption, a process that takes place before ovulation to resume meiosis of oocytes blocked in prophase I: may act by regulating maternal transcripts to control meiotic resumption. The protein is Spindlin-1 (Spin1) of Rattus norvegicus (Rat).